The chain runs to 263 residues: MGVIDLITRVDSICKKYEKYDINRQRDANVSGDDAFSRLYSAVEYALETVLQKTEDLSSETNKAKAVAMNAEIRRTKARLLEGIPKLQRLSLKKVKGLSKEELDARNDLVLSLRDKIEAIPESSAPVVGGWEASTSYSNIRFDTNVSDDRIGSEYFQPTGESDQFKQEYEMKRIKQARLDYIAEGLDTLKNMAQDINEELDRQEPLMDEIDTKIDKAATDLKSTNVRLKDTVTKLRSSRNFCIDIILLCILLGIAAFIYNSVK.

The Cytoplasmic portion of the chain corresponds to 1-240 (MGVIDLITRV…TVTKLRSSRN (240 aa)). Ser-12 carries the phosphoserine modification. In terms of domain architecture, t-SNARE coiled-coil homology spans 169–231 (YEMKRIKQAR…KSTNVRLKDT (63 aa)). Residues 241 to 261 (FCIDIILLCILLGIAAFIYNS) traverse the membrane as a helical; Anchor for type IV membrane protein segment. Over 262 to 263 (VK) the chain is Vesicular.

This sequence belongs to the syntaxin family. Part of the t-SNARE complex. In terms of tissue distribution, expressed in root, leaf, stem, flower and silique.

It localises to the membrane. Vesicle trafficking protein that functions in the secretory pathway. This is Syntaxin-73 (SYP73) from Arabidopsis thaliana (Mouse-ear cress).